The sequence spans 614 residues: DNA mismatch repair protein MutL (614 aa).

A disordered region spans residues proline 355–leucine 411. Residues serine 382–glycine 401 show a composition bias toward low complexity.

Belongs to the DNA mismatch repair MutL/HexB family.

In terms of biological role, this protein is involved in the repair of mismatches in DNA. It is required for dam-dependent methyl-directed DNA mismatch repair. May act as a 'molecular matchmaker', a protein that promotes the formation of a stable complex between two or more DNA-binding proteins in an ATP-dependent manner without itself being part of a final effector complex. This is DNA mismatch repair protein MutL from Shewanella woodyi (strain ATCC 51908 / MS32).